The sequence spans 125 residues: Large ribosomal subunit protein bL12 (125 aa).

It belongs to the bacterial ribosomal protein bL12 family. As to quaternary structure, homodimer. Part of the ribosomal stalk of the 50S ribosomal subunit. Forms a multimeric L10(L12)X complex, where L10 forms an elongated spine to which 2 to 4 L12 dimers bind in a sequential fashion. Binds GTP-bound translation factors.

Functionally, forms part of the ribosomal stalk which helps the ribosome interact with GTP-bound translation factors. Is thus essential for accurate translation. The sequence is that of Large ribosomal subunit protein bL12 from Bradyrhizobium sp. (strain BTAi1 / ATCC BAA-1182).